Here is a 172-residue protein sequence, read N- to C-terminus: Small ribosomal subunit protein uS5 (172 aa).

Residues Y15 to V78 enclose the S5 DRBM domain.

Belongs to the universal ribosomal protein uS5 family. As to quaternary structure, part of the 30S ribosomal subunit. Contacts proteins S4 and S8.

In terms of biological role, with S4 and S12 plays an important role in translational accuracy. Functionally, located at the back of the 30S subunit body where it stabilizes the conformation of the head with respect to the body. The sequence is that of Small ribosomal subunit protein uS5 from Ruthia magnifica subsp. Calyptogena magnifica.